The following is a 58-amino-acid chain: MNLLERIKKLPEDWKRIITVAKKPDKDTFSMYLKVTLIVMAFVGLLAYLIQLVLAFII.

Residues I38 to I58 form a helical membrane-spanning segment.

This sequence belongs to the SecE/SEC61-gamma family. As to quaternary structure, component of the Sec protein translocase complex. Heterotrimer consisting of SecY (alpha), SecG (beta) and SecE (gamma) subunits. The heterotrimers can form oligomers, although 1 heterotrimer is thought to be able to translocate proteins. Interacts with the ribosome. May interact with SecDF, and other proteins may be involved.

The protein localises to the cell membrane. Functionally, essential subunit of the Sec protein translocation channel SecYEG. Clamps together the 2 halves of SecY. May contact the channel plug during translocation. This Acidianus ambivalens (Desulfurolobus ambivalens) protein is Protein translocase subunit SecE.